A 202-amino-acid polypeptide reads, in one-letter code: Virulence protein F (202 aa).

A compositionally biased stretch (polar residues) spans 1–15; that stretch reads MRNSSLRDASGSNDA. Residues 1–21 are disordered; the sequence is MRNSSLRDASGSNDAQVPHKT. One can recognise an F-box domain in the interval 20–42; that stretch reads KTELLNLPDHVLTEVAKRLATNN.

As to quaternary structure, component of SCF(virF) E3 ubiquitin ligase complexes. Interacts with host VIP1 and SKP1A. Interacts with Arabidopsis thaliana ENAP1/VFP3 and VFP5 in the host cell nucleus.

The protein localises to the host nucleus. In the host plant, component of SCF(virF) E3 ubiquitin ligase complexes, which mediate the ubiquitination and subsequent proteasomal degradation of target proteins such as the host VIP1, after its implication in T-DNA translocation to the host nucleus. Required for the formation of tumors of a wild-type size on certain plant species only. This chain is Virulence protein F, found in Agrobacterium tumefaciens (strain 15955).